The sequence spans 425 residues: Pyruvate dehydrogenase E1 component subunit alpha-3, chloroplastic (425 aa).

The transit peptide at 1 to 66 directs the protein to the chloroplast; it reads MAAASSFTAA…VLPGNKAAPA (66 aa). Residues His109, Tyr135, Arg136, Ala184, Ile186, Asp224, Gly225, and Asn253 each coordinate pyruvate. Tyr135, Arg136, Ala184, Ile186, Asp224, Gly225, Asn253, and His322 together coordinate thiamine diphosphate. Residue Asp224 coordinates Mg(2+). Asn253 is a binding site for Mg(2+).

In terms of assembly, tetramer of 2 alpha and 2 beta subunits. Thiamine diphosphate serves as cofactor. It depends on Mg(2+) as a cofactor.

It localises to the plastid. The protein resides in the chloroplast. The catalysed reaction is N(6)-[(R)-lipoyl]-L-lysyl-[protein] + pyruvate + H(+) = N(6)-[(R)-S(8)-acetyldihydrolipoyl]-L-lysyl-[protein] + CO2. In terms of biological role, the pyruvate dehydrogenase complex catalyzes the overall conversion of pyruvate to acetyl-CoA and CO(2). It contains multiple copies of three enzymatic components: pyruvate dehydrogenase (E1), dihydrolipoamide acetyltransferase (E2) and lipoamide dehydrogenase (E3). The sequence is that of Pyruvate dehydrogenase E1 component subunit alpha-3, chloroplastic from Oryza sativa subsp. japonica (Rice).